Here is a 309-residue protein sequence, read N- to C-terminus: Type II methyltransferase M.HgiDI (309 aa).

The SAM-dependent MTase C5-type domain occupies 1–297 (MKTIDLFAGC…TSLQAYLNQP (297 aa)). The active site involves C75.

Belongs to the class I-like SAM-binding methyltransferase superfamily. C5-methyltransferase family.

It catalyses the reaction a 2'-deoxycytidine in DNA + S-adenosyl-L-methionine = a 5-methyl-2'-deoxycytidine in DNA + S-adenosyl-L-homocysteine + H(+). A methylase that recognizes the double-stranded sequence 5'-GRCGYC-3', methylates C-? on both strands, and protects the DNA from cleavage by the HgiDI endonuclease. The protein is Type II methyltransferase M.HgiDI of Herpetosiphon aurantiacus (Herpetosiphon giganteus).